Consider the following 164-residue polypeptide: MELTDKASFRDAMAHVGAAVNIITTDGPAGRAGFTASAVCSVTDTPPTLLVCLNRSASVWPVFSEHHTLCVNTLAAGQEALSTLFGGKTAMDERFAAADWQTGATGCPRLEAALVSFDCRIDQRVSVGTHDILFCHVVAITRHPEPRGLMWFDRGYHTLMRPAC.

The protein belongs to the non-flavoprotein flavin reductase family. RutF subfamily.

It catalyses the reaction FMNH2 + NAD(+) = FMN + NADH + 2 H(+). In terms of biological role, catalyzes the reduction of FMN to FMNH2 which is used to reduce pyrimidine by RutA via the Rut pathway. In Klebsiella pneumoniae subsp. pneumoniae (strain ATCC 700721 / MGH 78578), this protein is FMN reductase (NADH) RutF.